The primary structure comprises 318 residues: MANTLEQLKPITTIVADTGDIEAIKRYQPEDATTNPSLILKASQIPEYSDLIENAINWAKSQSDDLEQQIEDAGDKLAVNIGLEILKIVPGRISTEVDARLSFDKTASIAKAHKLIQLYKEAGIDKSRILIKLASTWEGICAAKELEQEGINCNLTLLFSFAQARACAEAGVYLISPFVGRILDWYKKDTGLEYSAAEDPGVVSVTSIYNYYKRHGFNTVVMGASFRNTGEIIELAGCDRLTIGPALLEELSNSNTPIIQKLLPATETIAAQPAMSEAQFRWEFNEDPMAVEKLAEGIRNFAVDQGKLEVMLKAELSS.

The active-site Schiff-base intermediate with substrate is Lys132.

It belongs to the transaldolase family. Type 1 subfamily. As to quaternary structure, homodimer.

It localises to the cytoplasm. The enzyme catalyses D-sedoheptulose 7-phosphate + D-glyceraldehyde 3-phosphate = D-erythrose 4-phosphate + beta-D-fructose 6-phosphate. It participates in carbohydrate degradation; pentose phosphate pathway; D-glyceraldehyde 3-phosphate and beta-D-fructose 6-phosphate from D-ribose 5-phosphate and D-xylulose 5-phosphate (non-oxidative stage): step 2/3. In terms of biological role, transaldolase is important for the balance of metabolites in the pentose-phosphate pathway. The polypeptide is Transaldolase (Shewanella piezotolerans (strain WP3 / JCM 13877)).